Here is a 47-residue protein sequence, read N- to C-terminus: Protein PsbN (47 aa).

Residues 9 to 31 traverse the membrane as a helical segment; that stretch reads YSLLIAMVTITFGLTGYGLYTAF.

This sequence belongs to the PsbN family.

It is found in the cellular thylakoid membrane. May play a role in photosystem I and II biogenesis. The protein is Protein PsbN of Prochlorococcus marinus (strain MIT 9303).